Reading from the N-terminus, the 448-residue chain is Tubulin beta chain (448 aa).

Residues Gln11, Glu69, Ser138, Gly142, Thr143, Gly144, Asn204, and Asn226 each contribute to the GTP site. Position 69 (Glu69) interacts with Mg(2+). The interval Gly429–Tyr448 is disordered.

This sequence belongs to the tubulin family. Dimer of alpha and beta chains. A typical microtubule is a hollow water-filled tube with an outer diameter of 25 nm and an inner diameter of 15 nM. Alpha-beta heterodimers associate head-to-tail to form protofilaments running lengthwise along the microtubule wall with the beta-tubulin subunit facing the microtubule plus end conferring a structural polarity. Microtubules usually have 13 protofilaments but different protofilament numbers can be found in some organisms and specialized cells. Requires Mg(2+) as cofactor.

It is found in the cytoplasm. It localises to the cytoskeleton. Tubulin is the major constituent of microtubules, a cylinder consisting of laterally associated linear protofilaments composed of alpha- and beta-tubulin heterodimers. Microtubules grow by the addition of GTP-tubulin dimers to the microtubule end, where a stabilizing cap forms. Below the cap, tubulin dimers are in GDP-bound state, owing to GTPase activity of alpha-tubulin. In Schizosaccharomyces pombe (strain 972 / ATCC 24843) (Fission yeast), this protein is Tubulin beta chain (nda3).